The chain runs to 207 residues: High frequency lysogenization protein HflD homolog (207 aa).

It belongs to the HflD family.

It is found in the cytoplasm. The protein resides in the cell inner membrane. This chain is High frequency lysogenization protein HflD homolog, found in Azotobacter vinelandii (strain DJ / ATCC BAA-1303).